The chain runs to 295 residues: Microcin B17-processing protein McbB (295 aa).

The protein localises to the cytoplasm. In terms of biological role, necessary to process the inactive microcin B17 (McbA) precursor into the active peptide. This Escherichia coli protein is Microcin B17-processing protein McbB (mcbB).